The sequence spans 897 residues: Interference hedgehog (897 aa).

A signal peptide spans 1 to 26 (MSVTRGHKSTPSLLLLFLSVLTSLLA). Over 27–702 (AIPVLQANAP…THNETFNMNP (676 aa)) the chain is Extracellular. Ig-like C2-type domains follow at residues 40–147 (PGVR…ATIS), 148–235 (GDKI…RRLE), 244–336 (PSAA…YIQL), and 342–429 (PRIV…LQVN). Intrachain disulfides connect cysteine 63/cysteine 125, cysteine 169/cysteine 217, and cysteine 272/cysteine 320. Asparagine 96 and asparagine 99 each carry an N-linked (GlcNAc...) asparagine glycan. Asparagine 296, asparagine 351, asparagine 393, and asparagine 467 each carry an N-linked (GlcNAc...) asparagine glycan. A disulfide bond links cysteine 363 and cysteine 411. The disordered stretch occupies residues 434–468 (QAGDGMGTGGMGRSSNRNAHNRKQKQMVPPSAPNV). 2 consecutive Fibronectin type-III domains span residues 462-571 (PPSA…LQRG) and 579-674 (VPEL…TQRP). Heparin contacts are provided by arginine 498, lysine 504, and lysine 506. Asparagine 530 is a glycosylation site (N-linked (GlcNAc...) asparagine). Heparin is bound at residue arginine 545. Asparagine 561 carries N-linked (GlcNAc...) asparagine glycosylation. Positions 666–682 (LKQGRTQRPRSSTTAQP) are enriched in polar residues. Positions 666–694 (LKQGRTQRPRSSTTAQPTMHTVDTTTPTH) are disordered. Low complexity predominate over residues 683–694 (TMHTVDTTTPTH). N-linked (GlcNAc...) asparagine glycosylation is present at asparagine 695. A helical membrane pass occupies residues 703–723 (LLTGTISGGALLILLVISACL). At 724–897 (CLCKRRHSRG…SSGSLNSVGV (174 aa)) the chain is on the cytoplasmic side. 2 disordered regions span residues 773 to 793 (AQQQQQQLQQQHQQDEKDSQD) and 819 to 849 (MSSSSLRRSQRTLERAAAGGGSGGNNNNLNQ). The span at 774–784 (QQQQQQLQQQH) shows a compositional bias: low complexity.

This sequence belongs to the immunoglobulin superfamily. IHOG family. Homodimer. Heterotetramer; 2 iHog chains bind 2 hh chains when facilitated by heparin, heparin is required to promote high-affinity interactions between hh and iHog.

The protein localises to the membrane. In terms of biological role, mediates response to the active Hedgehog (Hh) protein signal in embryos, functioning upstream or at the level of patched (ptc). This chain is Interference hedgehog, found in Drosophila mojavensis (Fruit fly).